Reading from the N-terminus, the 493-residue chain is 3-octaprenyl-4-hydroxybenzoate carboxy-lyase (493 aa).

Asparagine 172 serves as a coordination point for Mn(2+). Prenylated FMN-binding positions include isoleucine 175–arginine 177, arginine 189–leucine 191, and arginine 194–glycine 195. Glutamate 238 provides a ligand contact to Mn(2+). The Proton donor role is filled by aspartate 287.

It belongs to the UbiD family. As to quaternary structure, homohexamer. It depends on prenylated FMN as a cofactor. Mn(2+) is required as a cofactor.

It localises to the cell membrane. The catalysed reaction is a 4-hydroxy-3-(all-trans-polyprenyl)benzoate + H(+) = a 2-(all-trans-polyprenyl)phenol + CO2. It participates in cofactor biosynthesis; ubiquinone biosynthesis. Functionally, catalyzes the decarboxylation of 3-octaprenyl-4-hydroxy benzoate to 2-octaprenylphenol, an intermediate step in ubiquinone biosynthesis. This chain is 3-octaprenyl-4-hydroxybenzoate carboxy-lyase, found in Shewanella baltica (strain OS195).